The sequence spans 668 residues: NADH-ubiquinone oxidoreductase chain 5 (668 aa).

18 consecutive transmembrane segments (helical) span residues 1–21 (MYIINLILPLIGSIITGLFGH), 31–51 (IAVGCMMLTALSSLYIGYEIL), 81–101 (LTSIMIIVITCISSMVHLYSM), 111–131 (TRFFSYLSLFTFFMMLLVTAD), 133–153 (FVQLFFGWEGVGIMSYLLINF), 178–198 (LFFGILLVFLVFKSVDFSVIF), 211–231 (LLGYEVNAITLIGSFIVIGVV), 251–271 (TPVSALLHAATMVTAGVFLVL), 283–303 (ILNILTIIGALTTLFATTIGI), 311–331 (VIAYSTCSQLGYMIFACGLLN), 339–359 (LTTHAFFKALLFLSAGSVIHG), 375–395 (LMPLTYQCMLIGTLALTGFPF), 421–441 (AIIGYVAAFGTTFYSFRLLIL), 462–482 (TNMVIPLVILAICSIFIGYLT), 519–539 (LLPLFAFIYGVLTPVLFYFNL), 566–586 (FDFLSRVLIAVPFFHLSYDVM), 629–649 (IVQAILLIIFVGIFSFMIGFL), and 650–668 (YVELFVILGALYLCLPKIK).

The protein belongs to the complex I subunit 5 family.

It localises to the mitochondrion inner membrane. The catalysed reaction is a ubiquinone + NADH + 5 H(+)(in) = a ubiquinol + NAD(+) + 4 H(+)(out). Functionally, core subunit of the mitochondrial membrane respiratory chain NADH dehydrogenase (Complex I) that is believed to belong to the minimal assembly required for catalysis. Complex I functions in the transfer of electrons from NADH to the respiratory chain. The immediate electron acceptor for the enzyme is believed to be ubiquinone. The protein is NADH-ubiquinone oxidoreductase chain 5 (nad5) of Dictyostelium citrinum (Slime mold).